Reading from the N-terminus, the 129-residue chain is Glycine cleavage system H protein (129 aa).

Positions 24 to 106 constitute a Lipoyl-binding domain; it reads TYTVGITEHA…YTDGWIFKIR (83 aa). Residue K65 is modified to N6-lipoyllysine.

This sequence belongs to the GcvH family. The glycine cleavage system is composed of four proteins: P, T, L and H. (R)-lipoate is required as a cofactor.

The glycine cleavage system catalyzes the degradation of glycine. The H protein shuttles the methylamine group of glycine from the P protein to the T protein. The polypeptide is Glycine cleavage system H protein (Enterobacter sp. (strain 638)).